Here is a 168-residue protein sequence, read N- to C-terminus: ATP synthase F(1) complex subunit delta, mitochondrial (168 aa).

The N-terminal 22 residues, 1-22, are a transit peptide targeting the mitochondrion; it reads MLPAALLRRPGLGRLVRHARAY. K136 and K165 each carry N6-acetyllysine; alternate. N6-succinyllysine; alternate is present on residues K136 and K165.

It belongs to the ATPase epsilon chain family. In terms of assembly, component of the ATP synthase complex composed at least of ATP5F1A/subunit alpha, ATP5F1B/subunit beta, ATP5MC1/subunit c (homooctomer), MT-ATP6/subunit a, MT-ATP8/subunit 8, ATP5ME/subunit e, ATP5MF/subunit f, ATP5MG/subunit g, ATP5MK/subunit k, ATP5MJ/subunit j, ATP5F1C/subunit gamma, ATP5F1D/subunit delta, ATP5F1E/subunit epsilon, ATP5PF/subunit F6, ATP5PB/subunit b, ATP5PD/subunit d, ATP5PO/subunit OSCP. ATP synthase complex consists of a soluble F(1) head domain (subunits alpha(3) and beta(3)) - the catalytic core - and a membrane F(0) domain - the membrane proton channel (subunits c, a, 8, e, f, g, k and j). These two domains are linked by a central stalk (subunits gamma, delta, and epsilon) rotating inside the F1 region and a stationary peripheral stalk (subunits F6, b, d, and OSCP). Component of a complex composed at least by ATPIF1, ATP5F1A, ATP5F1B, ATP5F1C AND ATP5F1E.

The protein resides in the mitochondrion. Its subcellular location is the mitochondrion inner membrane. Subunit delta, of the mitochondrial membrane ATP synthase complex (F(1)F(0) ATP synthase or Complex V) that produces ATP from ADP in the presence of a proton gradient across the membrane which is generated by electron transport complexes of the respiratory chain. ATP synthase complex consist of a soluble F(1) head domain - the catalytic core - and a membrane F(1) domain - the membrane proton channel. These two domains are linked by a central stalk rotating inside the F(1) region and a stationary peripheral stalk. During catalysis, ATP synthesis in the catalytic domain of F(1) is coupled via a rotary mechanism of the central stalk subunits to proton translocation. In vivo, can only synthesize ATP although its ATP hydrolase activity can be activated artificially in vitro. With the central stalk subunit gamma, is essential for the biogenesis of F(1) catalytic part of the ATP synthase complex namely in the formation of F1 assembly intermediate. In Homo sapiens (Human), this protein is ATP synthase F(1) complex subunit delta, mitochondrial.